The primary structure comprises 328 residues: GTPase Obg (328 aa).

An Obg domain is found at 1 to 159 (MNFIDEVKIY…MWVQLSLKLL (159 aa)). Residues 160–327 (SDVGLVGLPN…IIKLALQTIK (168 aa)) enclose the OBG-type G domain. Residues 166-173 (GLPNAGKS), 191-195 (FTTLV), 212-215 (DIPG), 279-282 (NKID), and 308-310 (STY) contribute to the GTP site. Mg(2+) contacts are provided by Ser173 and Thr193.

It belongs to the TRAFAC class OBG-HflX-like GTPase superfamily. OBG GTPase family. Monomer. Requires Mg(2+) as cofactor.

It is found in the cytoplasm. Functionally, an essential GTPase which binds GTP, GDP and possibly (p)ppGpp with moderate affinity, with high nucleotide exchange rates and a fairly low GTP hydrolysis rate. Plays a role in control of the cell cycle, stress response, ribosome biogenesis and in those bacteria that undergo differentiation, in morphogenesis control. The chain is GTPase Obg from Rickettsia bellii (strain RML369-C).